Consider the following 206-residue polypeptide: dCTP deaminase, dUMP-forming (206 aa).

DCTP contacts are provided by residues 117–122 (RSSFGR), Asp135, 143–145 (TLE), Gln163, Tyr177, Lys184, and Gln188. Glu145 acts as the Proton donor/acceptor in catalysis.

The protein belongs to the dCTP deaminase family. As to quaternary structure, homotrimer.

The catalysed reaction is dCTP + 2 H2O = dUMP + NH4(+) + diphosphate. Its pathway is pyrimidine metabolism; dUMP biosynthesis; dUMP from dCTP: step 1/1. Functionally, bifunctional enzyme that catalyzes both the deamination of dCTP to dUTP and the hydrolysis of dUTP to dUMP without releasing the toxic dUTP intermediate. The sequence is that of dCTP deaminase, dUMP-forming from Methanococcus maripaludis (strain C5 / ATCC BAA-1333).